Consider the following 319-residue polypeptide: HTH-type transcriptional regulator YidZ (319 aa).

Positions 8-65 constitute an HTH lysR-type domain; the sequence is LDLNLLLCLQLLMQERSVTKAAKRMNVTPSAVSKSLAKLRAWFDDPLFVNTPLGLAPT. The segment at residues 25–44 is a DNA-binding region (H-T-H motif); it reads VTKAAKRMNVTPSAVSKSLA.

This sequence belongs to the LysR transcriptional regulatory family.

In terms of biological role, involved in anaerobic NO protection. The sequence is that of HTH-type transcriptional regulator YidZ from Salmonella heidelberg (strain SL476).